We begin with the raw amino-acid sequence, 156 residues long: 6,7-dimethyl-8-ribityllumazine synthase (156 aa).

5-amino-6-(D-ribitylamino)uracil contacts are provided by residues phenylalanine 25, 59–61, and 83–85; these read AFE and AVI. A (2S)-2-hydroxy-3-oxobutyl phosphate-binding site is contributed by 88–89; it reads GT. The Proton donor role is filled by histidine 91. Phenylalanine 116 serves as a coordination point for 5-amino-6-(D-ribitylamino)uracil. Arginine 130 is a binding site for (2S)-2-hydroxy-3-oxobutyl phosphate.

It belongs to the DMRL synthase family.

The enzyme catalyses (2S)-2-hydroxy-3-oxobutyl phosphate + 5-amino-6-(D-ribitylamino)uracil = 6,7-dimethyl-8-(1-D-ribityl)lumazine + phosphate + 2 H2O + H(+). Its pathway is cofactor biosynthesis; riboflavin biosynthesis; riboflavin from 2-hydroxy-3-oxobutyl phosphate and 5-amino-6-(D-ribitylamino)uracil: step 1/2. Its function is as follows. Catalyzes the formation of 6,7-dimethyl-8-ribityllumazine by condensation of 5-amino-6-(D-ribitylamino)uracil with 3,4-dihydroxy-2-butanone 4-phosphate. This is the penultimate step in the biosynthesis of riboflavin. The sequence is that of 6,7-dimethyl-8-ribityllumazine synthase from Desulfovibrio desulfuricans (strain ATCC 27774 / DSM 6949 / MB).